Consider the following 361-residue polypeptide: Chorismate synthase (361 aa).

Residues R48 and R54 each coordinate NADP(+). FMN-binding positions include 125 to 127, 238 to 239, G278, 293 to 297, and R319; these read RSS, NA, and KPTSS.

It belongs to the chorismate synthase family. As to quaternary structure, homotetramer. It depends on FMNH2 as a cofactor.

It catalyses the reaction 5-O-(1-carboxyvinyl)-3-phosphoshikimate = chorismate + phosphate. It participates in metabolic intermediate biosynthesis; chorismate biosynthesis; chorismate from D-erythrose 4-phosphate and phosphoenolpyruvate: step 7/7. Catalyzes the anti-1,4-elimination of the C-3 phosphate and the C-6 proR hydrogen from 5-enolpyruvylshikimate-3-phosphate (EPSP) to yield chorismate, which is the branch point compound that serves as the starting substrate for the three terminal pathways of aromatic amino acid biosynthesis. This reaction introduces a second double bond into the aromatic ring system. In Escherichia coli (strain SE11), this protein is Chorismate synthase.